The chain runs to 61 residues: Photosystem II reaction center X protein (61 aa).

Residues 26 to 46 traverse the membrane as a helical segment; it reads IGSFIAAALLIVVPATAFLIF.

This sequence belongs to the PsbX family. Type 2 subfamily. As to quaternary structure, PSII consists of a core antenna complex that captures photons, and an electron transfer chain that converts photonic excitation into a charge separation. PSII forms dimeric complexes.

It is found in the cellular thylakoid membrane. Functionally, involved in the binding and/or turnover of quinones at the Q(B) site of Photosystem II. This is Photosystem II reaction center X protein from Prochlorococcus marinus (strain AS9601).